A 445-amino-acid chain; its full sequence is DNA primase DnaG (445 aa).

Residues 166–252 (DAIVVVEGRS…SVEDLSRSEV (87 aa)) enclose the Toprim domain. Residues glutamate 172, aspartate 214, and aspartate 216 each contribute to the Mg(2+) site. The tract at residues 276–355 (EEMSQAGEST…NGDGPTIPSL (80 aa)) is disordered. Over residues 284–298 (STTADGGAVAAATSD) the composition is skewed to low complexity. Residues 303–313 (NQPSPSSQTGS) are compositionally biased toward polar residues. Low complexity predominate over residues 324–337 (SVVDNSNATAVADA).

It belongs to the archaeal DnaG primase family. As to quaternary structure, forms a ternary complex with MCM helicase and DNA. Requires Mg(2+) as cofactor.

It catalyses the reaction ssDNA + n NTP = ssDNA/pppN(pN)n-1 hybrid + (n-1) diphosphate.. RNA polymerase that catalyzes the synthesis of short RNA molecules used as primers for DNA polymerase during DNA replication. This is DNA primase DnaG from Haloarcula marismortui (strain ATCC 43049 / DSM 3752 / JCM 8966 / VKM B-1809) (Halobacterium marismortui).